A 279-amino-acid polypeptide reads, in one-letter code: Putative pyruvate, phosphate dikinase regulatory protein (279 aa).

Residue 153 to 160 participates in ADP binding; it reads GVSRTSKT.

It belongs to the pyruvate, phosphate/water dikinase regulatory protein family. PDRP subfamily.

It catalyses the reaction N(tele)-phospho-L-histidyl/L-threonyl-[pyruvate, phosphate dikinase] + ADP = N(tele)-phospho-L-histidyl/O-phospho-L-threonyl-[pyruvate, phosphate dikinase] + AMP + H(+). It carries out the reaction N(tele)-phospho-L-histidyl/O-phospho-L-threonyl-[pyruvate, phosphate dikinase] + phosphate + H(+) = N(tele)-phospho-L-histidyl/L-threonyl-[pyruvate, phosphate dikinase] + diphosphate. In terms of biological role, bifunctional serine/threonine kinase and phosphorylase involved in the regulation of the pyruvate, phosphate dikinase (PPDK) by catalyzing its phosphorylation/dephosphorylation. This chain is Putative pyruvate, phosphate dikinase regulatory protein, found in Rhodopseudomonas palustris (strain BisB5).